The sequence spans 322 residues: ADP,ATP carrier protein (322 aa).

3 Solcar repeats span residues 25-118 (STFF…FKKM), 130-222 (KWFA…LKPV), and 230-316 (GNFL…VQLL). The next 5 membrane-spanning stretches (helical) occupy residues 27-54 (FFFDFMMGGVSAAVSKTAAAPIERVKLL), 95-119 (TANVLRYFPTQALNFAFKDKFKKMF), 128-148 (YAKWFAGNLASGGAAGAASLL), 198-219 (FGPSVVGIVVYRGLYFGMYDTL), and 233-253 (LASFLLGWAVTTGSGVASYPL). Residues Arg-100 and Lys-112 each contribute to the ADP site. Residue Arg-257 participates in ADP binding. The interval 257-262 (RRRMMM) is important for transport activity. The Nucleotide carrier signature motif signature appears at 257 to 262 (RRRMMM). A helical transmembrane segment spans residues 293 to 313 (AGANILRGVAGAGVLSIYDQV).

This sequence belongs to the mitochondrial carrier (TC 2.A.29) family. As to quaternary structure, monomer.

Its subcellular location is the mitochondrion inner membrane. It carries out the reaction ADP(in) + ATP(out) = ADP(out) + ATP(in). With respect to regulation, the matrix-open state (m-state) is inhibited by the membrane-permeable bongkrekic acid (BKA). The cytoplasmic-open state (c-state) is inhibited by the membrane-impermeable toxic inhibitor carboxyatractyloside (CATR). In terms of biological role, ADP:ATP antiporter that mediates import of ADP into the mitochondrial matrix for ATP synthesis, and export of ATP out to fuel the cell. Cycles between the cytoplasmic-open state (c-state) and the matrix-open state (m-state): operates by the alternating access mechanism with a single substrate-binding site intermittently exposed to either the cytosolic (c-state) or matrix (m-state) side of the inner mitochondrial membrane. The sequence is that of ADP,ATP carrier protein (anc1) from Schizosaccharomyces pombe (strain 972 / ATCC 24843) (Fission yeast).